Consider the following 651-residue polypeptide: Acetyl-coenzyme A synthetase (651 aa).

Residues 189–192, T311, and N335 contribute to the CoA site; that span reads RGGK. ATP contacts are provided by residues 387-389, 411-416, D500, and R515; these read GEP and DTWWQT. Position 523 (S523) interacts with CoA. R526 contacts ATP. 3 residues coordinate Mg(2+): V537, H539, and V542. R584 is a binding site for CoA. K609 bears the N6-acetyllysine mark.

The protein belongs to the ATP-dependent AMP-binding enzyme family. Mg(2+) serves as cofactor. Post-translationally, acetylated. Deacetylation by the SIR2-homolog deacetylase activates the enzyme.

The enzyme catalyses acetate + ATP + CoA = acetyl-CoA + AMP + diphosphate. Its function is as follows. Catalyzes the conversion of acetate into acetyl-CoA (AcCoA), an essential intermediate at the junction of anabolic and catabolic pathways. AcsA undergoes a two-step reaction. In the first half reaction, AcsA combines acetate with ATP to form acetyl-adenylate (AcAMP) intermediate. In the second half reaction, it can then transfer the acetyl group from AcAMP to the sulfhydryl group of CoA, forming the product AcCoA. In Allorhizobium ampelinum (strain ATCC BAA-846 / DSM 112012 / S4) (Agrobacterium vitis (strain S4)), this protein is Acetyl-coenzyme A synthetase.